A 422-amino-acid chain; its full sequence is MNDRFERLLKSRIGLDASSVGSAVIERAVRQRMSGLALHDEDEYWMRLNGSPGEVQALIEAVVVPETWFFRYPESFTTLARLAFERLPSLGGGRALRILSLPCSTGEEPYSIVMALLDAGLSEYLFEVDALDVSARVIERASLGVYGRNSFRGDELGFRDRHFSEVAEGYQLAEQVRRKVRFRCGNLLDPGLLAGEAPYDFVFCRNLLIYFDRPTQSEVVEVLKRLLRPDGAMFIGPAEASLLSQHGMQPIGVPLSFVFRRTSEAPRGARPKAVSDGARPVVAAAVERASIRPSPPPPAKPRQRLSSLVPPASGQPLASPVGEFDEIARLADAGQHREARAACERQLAARGPSATVFYWLGLLSDVAGQEQEAQDFYRKALYLEPQHAEALAHLAALLAARGDHAGARRLQQRAARGVNKDG.

The region spanning 1-264 (MNDRFERLLK…LSFVFRRTSE (264 aa)) is the CheR-type methyltransferase domain. S-adenosyl-L-methionine contacts are provided by residues Thr67, Arg71, Glu108, Asp132, 186 to 187 (NL), and 205 to 206 (RN). Positions 289 to 316 (ASIRPSPPPPAKPRQRLSSLVPPASGQP) are disordered. A TPR repeat occupies 354 to 387 (ATVFYWLGLLSDVAGQEQEAQDFYRKALYLEPQH).

Monomer.

In terms of biological role, involved in biofilm formation. The polypeptide is Probable biofilm formation methyltransferase WspC (wspC) (Pseudomonas aeruginosa (strain ATCC 15692 / DSM 22644 / CIP 104116 / JCM 14847 / LMG 12228 / 1C / PRS 101 / PAO1)).